The primary structure comprises 663 residues: Beta-galactosidase YesZ (663 aa).

Arg106 contacts substrate. Cys110 contributes to the Zn(2+) binding site. A substrate-binding site is contributed by Asn144. The Proton donor role is filled by Glu145. The Zn(2+) site is built by Cys153, Cys155, and Cys158. Glu296 acts as the Nucleophile in catalysis. Position 345 to 348 (345 to 348) interacts with substrate; the sequence is EISH.

It belongs to the glycosyl hydrolase 42 family. Homotrimer.

It catalyses the reaction Hydrolysis of terminal non-reducing beta-D-galactose residues in beta-D-galactosides.. Its function is as follows. May play a role in the degradation of rhamnogalacturonan derived from plant cell walls. This chain is Beta-galactosidase YesZ (yesZ), found in Bacillus subtilis (strain 168).